Consider the following 223-residue polypeptide: Ribosome maturation factor RimM (223 aa).

The segment covering 1 to 12 has biased composition (low complexity); the sequence is MARRPGSSSRGP. Disordered stretches follow at residues 1-44 and 203-223; these read MARR…DPGL and VADP…DDPG. A PRC barrel domain is found at 135 to 210; sequence DEDEFFLTDL…KVVADPPDDL (76 aa).

This sequence belongs to the RimM family. As to quaternary structure, binds ribosomal protein uS19.

The protein localises to the cytoplasm. Its function is as follows. An accessory protein needed during the final step in the assembly of 30S ribosomal subunit, possibly for assembly of the head region. Essential for efficient processing of 16S rRNA. May be needed both before and after RbfA during the maturation of 16S rRNA. It has affinity for free ribosomal 30S subunits but not for 70S ribosomes. The protein is Ribosome maturation factor RimM of Methylorubrum extorquens (strain CM4 / NCIMB 13688) (Methylobacterium extorquens).